Here is a 346-residue protein sequence, read N- to C-terminus: Phosphoribosylformylglycinamidine cyclo-ligase (346 aa).

This sequence belongs to the AIR synthase family.

Its subcellular location is the cytoplasm. The enzyme catalyses 2-formamido-N(1)-(5-O-phospho-beta-D-ribosyl)acetamidine + ATP = 5-amino-1-(5-phospho-beta-D-ribosyl)imidazole + ADP + phosphate + H(+). Its pathway is purine metabolism; IMP biosynthesis via de novo pathway; 5-amino-1-(5-phospho-D-ribosyl)imidazole from N(2)-formyl-N(1)-(5-phospho-D-ribosyl)glycinamide: step 2/2. This is Phosphoribosylformylglycinamidine cyclo-ligase from Bacillus cereus (strain ATCC 10987 / NRS 248).